A 2326-amino-acid chain; its full sequence is Probable voltage-dependent N-type calcium channel subunit alpha-1B (2326 aa).

Over 1-83 (MARLGNDVPA…DNIIRKYAKR (83 aa)) the chain is Cytoplasmic. The segment at 17-37 (AGGGRGANRHAGPQAGQRGMY) is disordered. An I repeat occupies 75–351 (NIIRKYAKRI…LVLGVLSGEF (277 aa)). A helical transmembrane segment spans residues 84 to 107 (ITEWPPFEYMILATIIANCIVLAL). Residues 108–124 (EQHLPDGDKTPMSERLD) lie on the Extracellular side of the membrane. A helical transmembrane segment spans residues 125 to 145 (DTEPYFIGIFCFEAGIKIIAL). Residues 146-156 (GFAFHKGSYLR) are Cytoplasmic-facing. The helical transmembrane segment at 157–175 (NGWNVMDFVVVLTGILTTI) threads the bilayer. Topologically, residues 176–180 (GTDFD) are extracellular. The helical transmembrane segment at 181–204 (LRTLRAVRVLRPLKLVSGIPSLQV) threads the bilayer. Residues 205–214 (VLKSIMKAMV) lie on the Cytoplasmic side of the membrane. The helical transmembrane segment at 215–237 (PLLQIGLLLFFAILMFAIIGLEF) threads the bilayer. The Extracellular segment spans residues 238–323 (YMGKFHKTCF…TANDALGNTW (86 aa)). N-linked (GlcNAc...) asparagine glycosylation is present at Asn271. Residues 324–348 (NWLYFIPLIVIGSFFMLNLVLGVLS) form a helical membrane-spanning segment. The Cytoplasmic portion of the chain corresponds to 349-472 (GEFAKERERV…FFIRRMVKSQ (124 aa)). Positions 371-388 (QQVEQEFNRYLRWIHIAE) are binding to the beta subunit. An II repeat occupies 458–702 (EKRFRFFIRR…VFLAIAVDNL (245 aa)). The chain crosses the membrane as a helical span at residues 473–491 (SFYWIVLCLVGLNTLCVAI). The Extracellular portion of the chain corresponds to 492-501 (VHYDQPPLLT). Residues 502–524 (DALYFAEFVFLGLFLTEMSLKMY) traverse the membrane as a helical segment. The Cytoplasmic portion of the chain corresponds to 525 to 534 (GLGPRNYFHS). Residue Ser534 coordinates a 1,2-diacyl-sn-glycero-3-phospho-(1D-myo-inositol-4,5-bisphosphate). Residues 535–556 (SFNCFDFGVIVGSIFEVVWTAV) form a helical membrane-spanning segment. Residues 557-563 (KPDTSFG) lie on the Extracellular side of the membrane. The helical transmembrane segment at 564 to 576 (ISVLRALRLLRIF) threads the bilayer. The a 1,2-diacyl-sn-glycero-3-phospho-(1D-myo-inositol-4,5-bisphosphate) site is built by Arg574 and Lys577. Over 577 to 594 (KVTKYWNSLRNLVVSLLN) the chain is Cytoplasmic. Residues 595–620 (SMKSIISLLFLLFLFIVVFALLGMQL) form a helical membrane-spanning segment. Topologically, residues 621–672 (FGGQFNFEDGTPPTNFDTFPAAILTVFQILTGEDWNEVMYYGIEAHGGVKKG) are extracellular. The chain crosses the membrane as a helical span at residues 673–699 (MFSSVYFIILTLFGNYTLLNVFLAIAV). At 700–1148 (DNLANAQELT…ACHYIVNLRY (449 aa)) the chain is on the cytoplasmic side. Residues 793-1048 (SHQIRPDMKT…LQHLPQQPED (256 aa)) form a disordered region. 5 stretches are compositionally biased toward basic and acidic residues: residues 796 to 808 (IRPD…DRPL), 854 to 879 (KLGE…DDKR), 886 to 908 (SKET…SHEG), 935 to 979 (HGTE…EGAE), and 994 to 1011 (SEEK…VLRE). Residues 1020–1032 (TQPSQDSGTQGNV) show a composition bias toward polar residues. The III repeat unit spans residues 1134 to 1416 (NPVRRACHYI…IFVALIIITF (283 aa)). Residues 1149 to 1167 (FEMCILLVITMSSIALAAE) form a helical membrane-spanning segment. Residues 1168–1175 (DPVQGDAP) lie on the Extracellular side of the membrane. The helical transmembrane segment at 1176 to 1200 (RNNVLKYLDYVFTGVFTFEMVIKMI) threads the bilayer. Topologically, residues 1201–1214 (NLGLILHPGSYFRD) are cytoplasmic. A helical membrane pass occupies residues 1215–1235 (LWNILDFIVVSGALVAFAFTG). Residues 1236 to 1241 (SRGKDL) are Extracellular-facing. A helical membrane pass occupies residues 1242–1262 (NTIKSLRVLRVLRPLKTIKRL). At 1263–1280 (PKLKAVFDCVVNSLKNVL) the chain is on the cytoplasmic side. Residues 1281–1300 (NILIVYMLFMFIFAVIAVQL) form a helical membrane-spanning segment. The Extracellular portion of the chain corresponds to 1301–1387 (FKGKFFYCTD…DQGPSPSYRM (87 aa)). The helical transmembrane segment at 1388-1413 (EMSIFYVVYFVVFPFFFVNIFVALII) threads the bilayer. Residues 1414-1468 (ITFQEQGDKVMSDCSLEKNERACIDFAISAKPLTRYMPQNKQTFQYKMWKFVVSP) lie on the Cytoplasmic side of the membrane. Residues 1453–1708 (NKQTFQYKMW…LFVAVIMDNF (256 aa)) form an IV repeat. A helical membrane pass occupies residues 1469–1487 (PFEYLIMALIALNTIVLMM). Residues 1488 to 1495 (KFYNAPDP) are Extracellular-facing. The helical transmembrane segment at 1496–1520 (YDRMLQYLNILFTFLFSMECVLKLI) threads the bilayer. Topologically, residues 1521-1530 (GFGVLNYFRD) are cytoplasmic. The helical transmembrane segment at 1531–1552 (AWNVFDFVTVLGSITDILVTEL) threads the bilayer. The Extracellular portion of the chain corresponds to 1553–1558 (ADSFIN). N-linked (GlcNAc...) asparagine glycosylation is present at Asn1558. Residues 1559–1577 (LSFLRLFRAARLIKLLRQG) form a helical membrane-spanning segment. Over 1578–1596 (YTIRILLWTFVQSFKALPY) the chain is Cytoplasmic. The chain crosses the membrane as a helical span at residues 1597-1616 (VCLLIAMLFFIYAIIGMQVF). Residues 1617 to 1680 (GNIELDDDGA…IDGDECGSNF (64 aa)) lie on the Extracellular side of the membrane. A helical membrane pass occupies residues 1681–1704 (AYFYFVSFIFFSSFLMLNLFVAVI). The Cytoplasmic portion of the chain corresponds to 1705–2326 (MDNFEYLTRD…YRETDEDDWC (622 aa)). Positions 1721-1756 (HHLDEFIRVWAEYDPGARGRITYNDMYEMLRHMCPP) constitute an EF-hand domain. The Ca(2+) site is built by Asp1734, Arg1740, and Asp1745. Over residues 1897-1912 (EEPSSYSTSHKNSVNP) the composition is skewed to polar residues. Disordered regions lie at residues 1897–1916 (EEPS…LYQG), 1932–1954 (CAEG…KSSS), 2039–2242 (PHHH…SSDP), and 2271–2326 (TTAT…DDWC). Basic and acidic residues predominate over residues 1932 to 1948 (CAEGKKEVPESHPEEAG). Residues 2039–2055 (PHHHHHHHRCHHRREKK) show a composition bias toward basic residues. Composition is skewed to basic and acidic residues over residues 2056-2069 (QRSL…HADE) and 2077-2104 (QLRD…EKQR). Composition is skewed to polar residues over residues 2142-2161 (GSGS…STPS), 2275-2289 (GRSP…QPPQ), and 2302-2311 (GRSTGPSTAA).

Belongs to the calcium channel alpha-1 subunit (TC 1.A.1.11) family. As to quaternary structure, multisubunit complex consisting of alpha-1, alpha-2, beta and delta subunits in a 1:1:1:1 ratio. The channel activity is directed by the pore-forming and voltage-sensitive alpha-1 subunit. In many cases, this subunit is sufficient to generate voltage-sensitive calcium channel activity. The auxiliary subunits beta and alpha-2/delta linked by a disulfide bridge regulate the channel activity. Phosphorylated in vitro by CaM-kinase II, PKA, PKC and CGPK. Expression is higher in the electric lobe than in the forebrain.

Its subcellular location is the membrane. Functionally, the isoform alpha-1B gives rise to N-type calcium currents. N-type calcium channels belong to the 'high-voltage activated' (HVA) group. The sequence is that of Probable voltage-dependent N-type calcium channel subunit alpha-1B from Diplobatis ommata (Ocellated electric ray).